Reading from the N-terminus, the 620-residue chain is Chaperone protein HscA homolog (620 aa).

It belongs to the heat shock protein 70 family.

Functionally, chaperone involved in the maturation of iron-sulfur cluster-containing proteins. Has a low intrinsic ATPase activity which is markedly stimulated by HscB. The chain is Chaperone protein HscA homolog from Pasteurella multocida (strain Pm70).